Consider the following 393-residue polypeptide: High mobility group protein DSP1 (393 aa).

Positions 153 to 179 (QMQQQQQQQNVINSASPMSRVKADAKP) are disordered. DNA-binding regions (HMG box) lie at residues 179-249 (PRGR…QNYV) and 271-339 (PKRS…TEYK). The segment covering 364 to 374 (LLAAAAQQQHQ) has biased composition (low complexity). Residues 364–393 (LLAAAAQQQHQQLEEQHDDDDGDGDDDENQ) form a disordered region. Residues 379 to 393 (QHDDDDGDGDDDENQ) show a composition bias toward acidic residues.

Belongs to the HMGB family.

It localises to the nucleus. The protein resides in the chromosome. Functionally, binds preferentially single-stranded DNA and unwinds double-stranded DNA. The sequence is that of High mobility group protein DSP1 (Dsp1) from Drosophila melanogaster (Fruit fly).